The following is a 1431-amino-acid chain: DNA-directed RNA polymerase subunit beta' (1431 aa).

The Zn(2+) site is built by Cys-66, Cys-68, Cys-81, and Cys-84. The Mg(2+) site is built by Asp-470, Asp-472, and Asp-474. Positions 813, 887, 894, and 897 each coordinate Zn(2+).

It belongs to the RNA polymerase beta' chain family. The RNAP catalytic core consists of 2 alpha, 1 beta, 1 beta' and 1 omega subunit. When a sigma factor is associated with the core the holoenzyme is formed, which can initiate transcription. The cofactor is Mg(2+). It depends on Zn(2+) as a cofactor.

The enzyme catalyses RNA(n) + a ribonucleoside 5'-triphosphate = RNA(n+1) + diphosphate. In terms of biological role, DNA-dependent RNA polymerase catalyzes the transcription of DNA into RNA using the four ribonucleoside triphosphates as substrates. The protein is DNA-directed RNA polymerase subunit beta' of Parabacteroides distasonis (strain ATCC 8503 / DSM 20701 / CIP 104284 / JCM 5825 / NCTC 11152).